The chain runs to 304 residues: UDP-3-O-acyl-N-acetylglucosamine deacetylase (304 aa).

3 residues coordinate Zn(2+): His78, His237, and Asp241. The active-site Proton donor is the His264.

The protein belongs to the LpxC family. Zn(2+) is required as a cofactor.

The catalysed reaction is a UDP-3-O-[(3R)-3-hydroxyacyl]-N-acetyl-alpha-D-glucosamine + H2O = a UDP-3-O-[(3R)-3-hydroxyacyl]-alpha-D-glucosamine + acetate. The protein operates within glycolipid biosynthesis; lipid IV(A) biosynthesis; lipid IV(A) from (3R)-3-hydroxytetradecanoyl-[acyl-carrier-protein] and UDP-N-acetyl-alpha-D-glucosamine: step 2/6. In terms of biological role, catalyzes the hydrolysis of UDP-3-O-myristoyl-N-acetylglucosamine to form UDP-3-O-myristoylglucosamine and acetate, the committed step in lipid A biosynthesis. This chain is UDP-3-O-acyl-N-acetylglucosamine deacetylase, found in Thioalkalivibrio sulfidiphilus (strain HL-EbGR7).